The following is a 1894-amino-acid chain: Plexin-A1 (1894 aa).

Residues 1-27 (MPLPPLSSRTLLLLLLLLLRGVWIAIS) form the signal peptide. The Sema domain occupies 28 to 510 (SPPAGLGPQP…TEKQVTQVPV (483 aa)). The Extracellular segment spans residues 28–1242 (SPPAGLGPQP…VYSDSLLTLP (1215 aa)). Asn-75 carries N-linked (GlcNAc...) asparagine glycosylation. Cystine bridges form between Cys-93–Cys-102, Cys-128–Cys-136, Cys-284–Cys-405, Cys-300–Cys-356, Cys-374–Cys-393, Cys-513–Cys-530, Cys-519–Cys-561, Cys-522–Cys-539, Cys-533–Cys-545, and Cys-596–Cys-615. Residues Asn-658, Asn-670, and Asn-699 are each glycosylated (N-linked (GlcNAc...) asparagine). 4 IPT/TIG domains span residues 862 to 957 (PKIL…FTFV), 959 to 1043 (PTFY…YNYT), 1046 to 1145 (PTIL…FLYY), and 1148 to 1234 (PVLE…LQVY). An N-linked (GlcNAc...) asparagine glycan is attached at Asn-1041. 2 N-linked (GlcNAc...) asparagine glycosylation sites follow: Asn-1185 and Asn-1210. The helical transmembrane segment at 1243–1263 (AIVGIGGGGGLLLLVIVAVLI) threads the bilayer. Positions 1262–1315 (LIAYKRKSRDADRTLKRLQLQMDNLESRVALECKEAFAELQTDIHELTSDLDGA) form a coiled coil. Residues 1264–1894 (AYKRKSRDAD…QVVDTMALSS (631 aa)) lie on the Cytoplasmic side of the membrane.

It belongs to the plexin family. As to quaternary structure, interacts directly with NRP1 and NRP2. Interacts with PLXN1B. Interacts with FARP2, RND1 and KDR/VEGFR2. Binding of SEMA3A leads to dissociation of FARP2. Interacts with CRMP1, DPYSL2/CRMP2, DPYSL3/CRMP3 and DPYSL4/CRMP4. Interacts (via TIG domains) with TREM2; the interaction mediates SEMA6D binding and signaling through TYROBP. As to expression, ubiquitous.

Its subcellular location is the cell membrane. Coreceptor for SEMA3A, SEMA3C, SEMA3F and SEMA6D. Necessary for signaling by class 3 semaphorins and subsequent remodeling of the cytoskeleton. Plays a role in axon guidance, invasive growth and cell migration. Class 3 semaphorins bind to a complex composed of a neuropilin and a plexin. The plexin modulates the affinity of the complex for specific semaphorins, and its cytoplasmic domain is required for the activation of down-stream signaling events in the cytoplasm. Acts as coreceptor of TREM2 for SEMA6D in dendritic cells and is involved in the generation of immune responses and skeletal homeostasis. The polypeptide is Plexin-A1 (Plxna1) (Mus musculus (Mouse)).